A 408-amino-acid chain; its full sequence is 3-phosphoshikimate 1-carboxyvinyltransferase (408 aa).

3-phosphoshikimate is bound by residues Lys20, Ser21, and Arg25. Lys20 is a phosphoenolpyruvate binding site. Arg111 lines the phosphoenolpyruvate pocket. 3-phosphoshikimate-binding residues include Ser151, Ser152, Gln153, Ser178, Asp293, and Lys320. Gln153 is a binding site for phosphoenolpyruvate. The active-site Proton acceptor is the Asp293. Positions 324, 365, and 389 each coordinate phosphoenolpyruvate.

It belongs to the EPSP synthase family. In terms of assembly, monomer.

The protein resides in the cytoplasm. The enzyme catalyses 3-phosphoshikimate + phosphoenolpyruvate = 5-O-(1-carboxyvinyl)-3-phosphoshikimate + phosphate. The protein operates within metabolic intermediate biosynthesis; chorismate biosynthesis. Catalyzes the transfer of the enolpyruvyl moiety of phosphoenolpyruvate (PEP) to the 5-hydroxyl of shikimate-3-phosphate (S3P) to produce enolpyruvyl shikimate-3-phosphate and inorganic phosphate. The protein is 3-phosphoshikimate 1-carboxyvinyltransferase of Sulfurisphaera tokodaii (strain DSM 16993 / JCM 10545 / NBRC 100140 / 7) (Sulfolobus tokodaii).